We begin with the raw amino-acid sequence, 258 residues long: MLRLALTGVTGRMGRAVLELAASAPDIQLVCGLIRPARDPHEVAAQLPAPLALTSRVAELVQGADVVVDFSHPAVTVAVAEAAAHAGIPLVSGTTGLSEHDQAVILRAAQHVPVVQAANFSLGIALLHWLLPELVARLPTWDVELIERHHRHKRDAPSGTALALARTLLAAREPAPSPLVYGRGPGTAPRQPGEVGIHAVRAGGEVGRHTVLLATDDEAIEVTHWVQSRRAYAQGALEAARRLIGRPPGLYSLQDLVT.

NAD(+)-binding positions include 8–13 (GVTGRM), 93–95 (GTT), and 117–120 (AANF). Residue histidine 149 is the Proton donor/acceptor of the active site. Histidine 150 provides a ligand contact to (S)-2,3,4,5-tetrahydrodipicolinate. Lysine 153 functions as the Proton donor in the catalytic mechanism. 159 to 160 (GT) contacts (S)-2,3,4,5-tetrahydrodipicolinate.

It belongs to the DapB family.

It localises to the cytoplasm. It catalyses the reaction (S)-2,3,4,5-tetrahydrodipicolinate + NAD(+) + H2O = (2S,4S)-4-hydroxy-2,3,4,5-tetrahydrodipicolinate + NADH + H(+). The enzyme catalyses (S)-2,3,4,5-tetrahydrodipicolinate + NADP(+) + H2O = (2S,4S)-4-hydroxy-2,3,4,5-tetrahydrodipicolinate + NADPH + H(+). It functions in the pathway amino-acid biosynthesis; L-lysine biosynthesis via DAP pathway; (S)-tetrahydrodipicolinate from L-aspartate: step 4/4. Functionally, catalyzes the conversion of 4-hydroxy-tetrahydrodipicolinate (HTPA) to tetrahydrodipicolinate. In Thermomicrobium roseum (strain ATCC 27502 / DSM 5159 / P-2), this protein is 4-hydroxy-tetrahydrodipicolinate reductase.